We begin with the raw amino-acid sequence, 306 residues long: RNA pseudouridylate synthase domain-containing protein 1 (306 aa).

At M1 the chain carries N-acetylmethionine. Residue D67 is part of the active site. Positions 255 to 290 (RTDPDPDPMSGGPRPCSPSTPQPRPGRPPPETEAQR) are disordered. A compositionally biased stretch (pro residues) spans 269 to 285 (PCSPSTPQPRPGRPPPE).

It belongs to the pseudouridine synthase RluA family.

The protein is RNA pseudouridylate synthase domain-containing protein 1 (Rpusd1) of Mus musculus (Mouse).